Consider the following 96-residue polypeptide: Small ribosomal subunit protein bS18c (96 aa).

Belongs to the bacterial ribosomal protein bS18 family. In terms of assembly, part of the 30S ribosomal subunit.

Its subcellular location is the plastid. The protein localises to the chloroplast. This Pinus thunbergii (Japanese black pine) protein is Small ribosomal subunit protein bS18c (rps18).